The sequence spans 523 residues: Cytochrome b5 reductase 4 (523 aa).

The region spanning 54 to 130 (LIDVTEEELA…LKECLIGRMA (77 aa)) is the Cytochrome b5 heme-binding domain. Heme is bound by residues histidine 89 and histidine 112. Residues 167–258 (ESHPWYDWFQ…KEPVSWKSLG (92 aa)) enclose the CS domain. The FAD-binding FR-type domain maps to 275 to 387 (LYYRKCRLAS…SNPQGTFSSF (113 aa)). FAD contacts are provided by residues 367–382 (ENLT…NPQG) and 394–426 (DVFL…KAKL).

This sequence belongs to the flavoprotein pyridine nucleotide cytochrome reductase family. FAD serves as cofactor.

The protein resides in the endoplasmic reticulum. It catalyses the reaction 2 Fe(III)-[cytochrome b5] + NADH = 2 Fe(II)-[cytochrome b5] + NAD(+) + H(+). Its function is as follows. NADH-cytochrome b5 reductase involved in endoplasmic reticulum stress response pathway. This Xenopus tropicalis (Western clawed frog) protein is Cytochrome b5 reductase 4 (cyb5r4).